The following is a 121-amino-acid chain: uncharacterized protein (121 aa).

This is an uncharacterized protein from Saccharomyces cerevisiae (strain ATCC 204508 / S288c) (Baker's yeast).